The primary structure comprises 441 residues: MHNPQHYMTGFGNEFATEAVAGSLPVGQNSPQRVAHGLYAEQLSGTAFTAPRGENRRSWLYRIRPAAVHGRFSLIEQSRLHNDFGGGPVPPDQMRWSPLPLPATPTDFVDGLYTMAGNGSPEAMTGVAVHLYAANASMHGRFFYNADGELLLVPQLGRLRVCTELGVLELEPQQVGVIPRGVRFRVELLDSAARGYVCENFGGLLRLPDLGPIGANGLANPRDFETPRAAFEQRDGAFELVAKFQGDLWRADIDHSPLDVVAWHGNYAPYRYDLRRFNTIGSISFDHPDPSIFTVLTSPSDTHGTANMDFAIFPPRWLVAQHTFRPPWFHRNVASEFMGLVHGVYDAKAEGFAPGGASLHNCMSGHGPDAATFDKASQADLTRPDVIAETMAFMFETRAVLRPTQQALSAAHRQADYQQCWSGLRAAFQHPPAKNTTSVLR.

Catalysis depends on His287, which acts as the Proton acceptor. Positions 330 and 336 each coordinate Fe cation. Residues Tyr345 and His366 each contribute to the homogentisate site. His366 is a binding site for Fe cation.

It belongs to the homogentisate dioxygenase family. Hexamer; dimer of trimers. Requires Fe cation as cofactor.

It catalyses the reaction homogentisate + O2 = 4-maleylacetoacetate + H(+). It participates in amino-acid degradation; L-phenylalanine degradation; acetoacetate and fumarate from L-phenylalanine: step 4/6. Its function is as follows. Involved in the catabolism of homogentisate (2,5-dihydroxyphenylacetate or 2,5-OH-PhAc), a central intermediate in the degradation of phenylalanine and tyrosine. Catalyzes the oxidative ring cleavage of the aromatic ring of homogentisate to yield maleylacetoacetate. This Xanthomonas oryzae pv. oryzae (strain KACC10331 / KXO85) protein is Homogentisate 1,2-dioxygenase.